Here is a 526-residue protein sequence, read N- to C-terminus: Fumitremorgin C synthase (526 aa).

The chain crosses the membrane as a helical span at residues 4–24 (LPLSPAVLFLIIVLPILYLWI). Cysteine 443 contacts heme.

Belongs to the cytochrome P450 family. The cofactor is heme.

It is found in the membrane. The catalysed reaction is tryprostatin A + reduced [NADPH--hemoprotein reductase] + O2 = fumitremorgin C + oxidized [NADPH--hemoprotein reductase] + 2 H2O + H(+). It participates in mycotoxin biosynthesis. In terms of biological role, cytochrome P450 monooxygenase; part of the gene cluster that mediates the biosynthesis of fumitremorgins, indole alkaloids that carry not only intriguing chemical structures, but also interesting biological and pharmacological activities. The biosynthesis of fumitremorgin-type alkaloids begins by condensation of the two amino acids L-tryptophan and L-proline to brevianamide F, catalyzed by the non-ribosomal peptide synthetase ftmA. Brevianamide F is then prenylated by the prenyltransferase ftmPT1/ftmB in the presence of dimethylallyl diphosphate, resulting in the formation of tryprostatin B. The three cytochrome P450 monooxygenases, ftmP450-1/ftmC, ftmP450-2/ftmE and ftmP450-3/FtmG, are responsible for the conversion of tryprostatin B to 6-hydroxytryprostatin B, tryprostatin A to fumitremorgin C and fumitremorgin C to 12,13-dihydroxyfumitremorgin C, respectively. The putative methyltransferase ftmMT/ftmD is expected for the conversion of 6-hydroxytryprostatin B to tryprostatin A. FtmPT2/FtmH catalyzes the prenylation of 12,13-dihydroxyfumitre-morgin C in the presence of dimethylallyl diphosphate, resulting in the formation of fumitremorgin B. Fumitremorgin B is further converted to verruculogen by ftmOx1/ftmF via the insertion of an endoperoxide bond between the two prenyl moieties. In some fungal species, verruculogen is further converted to fumitremorgin A, but the enzymes involved in this step have not been identified yet. This chain is Fumitremorgin C synthase, found in Aspergillus fumigatus (Neosartorya fumigata).